A 325-amino-acid polypeptide reads, in one-letter code: Tryptophan--tRNA ligase (325 aa).

ATP is bound by residues 9-11 and 17-18; these read QPS and GN. The short motif at 10 to 18 is the 'HIGH' region element; sequence PSGILHIGN. Asp-132 provides a ligand contact to L-tryptophan. Residues 144–146, Val-184, and 191–195 each bind ATP; these read GKD and KMSKS. Residues 191–195 carry the 'KMSKS' region motif; the sequence is KMSKS.

Belongs to the class-I aminoacyl-tRNA synthetase family. As to quaternary structure, homodimer.

It localises to the cytoplasm. It carries out the reaction tRNA(Trp) + L-tryptophan + ATP = L-tryptophyl-tRNA(Trp) + AMP + diphosphate + H(+). In terms of biological role, catalyzes the attachment of tryptophan to tRNA(Trp). In Fusobacterium nucleatum subsp. nucleatum (strain ATCC 25586 / DSM 15643 / BCRC 10681 / CIP 101130 / JCM 8532 / KCTC 2640 / LMG 13131 / VPI 4355), this protein is Tryptophan--tRNA ligase.